Consider the following 74-residue polypeptide: Conotoxin Vc6.11 (74 aa).

Residues 1-19 form the signal peptide; it reads MEKLTILLLVAAVLMSTQA. The propeptide occupies 20 to 41; that stretch reads LIQEQRQKAKINLFSKRKPSAE. Cystine bridges form between cysteine 55–cysteine 66 and cysteine 61–cysteine 71.

Belongs to the conotoxin O2 superfamily. As to expression, expressed by the venom duct.

The protein resides in the secreted. In terms of biological role, inhibits voltage-gated ion channels. The protein is Conotoxin Vc6.11 of Conus victoriae (Queen Victoria cone).